Reading from the N-terminus, the 343-residue chain is S-adenosylmethionine:tRNA ribosyltransferase-isomerase (343 aa).

This sequence belongs to the QueA family. As to quaternary structure, monomer.

It is found in the cytoplasm. It catalyses the reaction 7-aminomethyl-7-carbaguanosine(34) in tRNA + S-adenosyl-L-methionine = epoxyqueuosine(34) in tRNA + adenine + L-methionine + 2 H(+). It functions in the pathway tRNA modification; tRNA-queuosine biosynthesis. Transfers and isomerizes the ribose moiety from AdoMet to the 7-aminomethyl group of 7-deazaguanine (preQ1-tRNA) to give epoxyqueuosine (oQ-tRNA). The polypeptide is S-adenosylmethionine:tRNA ribosyltransferase-isomerase (Enterococcus faecalis (strain ATCC 700802 / V583)).